Consider the following 216-residue polypeptide: ATP-dependent Clp protease proteolytic subunit (216 aa).

Catalysis depends on S120, which acts as the Nucleophile. The active site involves H145.

The protein belongs to the peptidase S14 family. Fourteen ClpP subunits assemble into 2 heptameric rings which stack back to back to give a disk-like structure with a central cavity, resembling the structure of eukaryotic proteasomes.

It is found in the cytoplasm. It catalyses the reaction Hydrolysis of proteins to small peptides in the presence of ATP and magnesium. alpha-casein is the usual test substrate. In the absence of ATP, only oligopeptides shorter than five residues are hydrolyzed (such as succinyl-Leu-Tyr-|-NHMec, and Leu-Tyr-Leu-|-Tyr-Trp, in which cleavage of the -Tyr-|-Leu- and -Tyr-|-Trp bonds also occurs).. Functionally, cleaves peptides in various proteins in a process that requires ATP hydrolysis. Has a chymotrypsin-like activity. Plays a major role in the degradation of misfolded proteins. In Cupriavidus metallidurans (strain ATCC 43123 / DSM 2839 / NBRC 102507 / CH34) (Ralstonia metallidurans), this protein is ATP-dependent Clp protease proteolytic subunit.